Reading from the N-terminus, the 645-residue chain is UPF0313 protein CLM_0251 (645 aa).

The 272-residue stretch at 295–566 folds into the Radical SAM core domain; that stretch reads AIKEVKFSIT…RMQRALLQFS (272 aa). Positions 309, 313, and 316 each coordinate [4Fe-4S] cluster. A disordered region spans residues 598–645; it reads NKPYKKSHKKNNAKNNNNHYNKNNNYNKNKDISKKNKKNSLSKHKKRK. Residues 600-609 show a composition bias toward basic residues; it reads PYKKSHKKNN. Over residues 610 to 624 the composition is skewed to low complexity; it reads AKNNNNHYNKNNNYN. Basic residues predominate over residues 632–645; it reads KNKKNSLSKHKKRK.

This sequence belongs to the UPF0313 family. [4Fe-4S] cluster serves as cofactor.

This Clostridium botulinum (strain Kyoto / Type A2) protein is UPF0313 protein CLM_0251.